We begin with the raw amino-acid sequence, 513 residues long: Calcium-dependent protein kinase 2 (513 aa).

Glycine 2 is lipidated: N-myristoyl glycine. The region spanning 72–326 (YIIDEKLGQG…IEEALNHPWI (255 aa)) is the Protein kinase domain. Residues 78 to 86 (LGQGTYGCV) and lysine 101 each bind ATP. Catalysis depends on aspartate 192, which acts as the Proton acceptor. The J domain autoinhibitory motif signature appears at 345–353 (NLKNFKKEN). The interval 345–380 (NLKNFKKENELKKIALTIIAKHLCDVEINNLRNIFI) is j domain. A J domain EF-hand interaction motif motif is present at residues 354–363 (ELKKIALTII). 4 consecutive EF-hand domains span residues 370 to 405 (VEIN…IGYQ), 406 to 441 (KIPP…KQTY), 442 to 477 (LKKE…DDIE), and 480 to 513 (LIDK…SKKK). Ca(2+)-binding residues include aspartate 383, aspartate 385, serine 387, threonine 389, and glutamate 394. Aspartate 455, aspartate 457, asparagine 459, lysine 461, glutamate 466, aspartate 493, asparagine 495, aspartate 497, glutamate 499, and glutamate 504 together coordinate Ca(2+).

The protein belongs to the protein kinase superfamily. Ser/Thr protein kinase family. CDPK subfamily. In terms of assembly, monomer. Requires Mg(2+) as cofactor. In terms of processing, myristoylated; myristoylation may target it to different subcellular compartments. Autophosphorylated in vitro.

The enzyme catalyses L-seryl-[protein] + ATP = O-phospho-L-seryl-[protein] + ADP + H(+). The catalysed reaction is L-threonyl-[protein] + ATP = O-phospho-L-threonyl-[protein] + ADP + H(+). Activated by calcium. Upon calcium binding to the EF-hand domains, the C-terminus of the junction domain (J domain) undergoes a conformational change which results in the dissociation of the pseudo-substrate inhibitory motif from the catalytic domain. This, in turn, may facilitate the autophosphorylation of the activation loop at Thr-232, which leads to the kinase activation. Calcium-dependent protein kinase which acts as a sensor and effector of intracellular Ca(2+) levels probably in part downstream of cGMP-activated PKG kinase. During male gametogenesis in the mosquito gut, required for male exflagellation, possibly by regulating male gamete exit from the host erythrocytes. Not required for asexual blood stage proliferation. This is Calcium-dependent protein kinase 2 from Plasmodium falciparum (isolate K1 / Thailand).